The sequence spans 188 residues: Probable chorismate pyruvate-lyase (188 aa).

The substrate site is built by R77, L115, and E174.

The protein belongs to the UbiC family.

The protein localises to the cytoplasm. It catalyses the reaction chorismate = 4-hydroxybenzoate + pyruvate. It participates in cofactor biosynthesis; ubiquinone biosynthesis. In terms of biological role, removes the pyruvyl group from chorismate, with concomitant aromatization of the ring, to provide 4-hydroxybenzoate (4HB) for the ubiquinone pathway. The protein is Probable chorismate pyruvate-lyase of Shewanella loihica (strain ATCC BAA-1088 / PV-4).